Consider the following 306-residue polypeptide: D-alanine--D-alanine ligase (306 aa).

An ATP-grasp domain is found at 101–301; sequence KKILAHAGLP…FPDLVEHLVR (201 aa). Position 129–185 (129–185) interacts with ATP; sequence VAELGLPVVVKAPTQGSSIGVYIVEREEDLEARITDAVAYGGTRVLVEKFIAGPELT. Mg(2+)-binding residues include Asp-256, Glu-268, and Asn-270.

It belongs to the D-alanine--D-alanine ligase family. Mg(2+) is required as a cofactor. The cofactor is Mn(2+).

It is found in the cytoplasm. It catalyses the reaction 2 D-alanine + ATP = D-alanyl-D-alanine + ADP + phosphate + H(+). It participates in cell wall biogenesis; peptidoglycan biosynthesis. Cell wall formation. This Desulforudis audaxviator (strain MP104C) protein is D-alanine--D-alanine ligase.